We begin with the raw amino-acid sequence, 1295 residues long: Phosphoribosylformylglycinamidine synthase (1295 aa).

Residues 305-327 form a disordered region; it reads WPGAATGSGGEIRDEGATGRGAK. ATP is bound by residues 307–318, 386–388, and Ala-678; these read GAATGSGGEIRD and TGY. Residues Asp-679, Glu-718, Asn-722, and Asp-884 each coordinate Mg(2+). Residue Ser-886 coordinates ATP. A Glutamine amidotransferase type-1 domain is found at 1042-1295; the sequence is VAVLREQGVN…IFRNARKQLG (254 aa). Catalysis depends on Cys-1135, which acts as the Nucleophile. Residues His-1260 and Glu-1262 contribute to the active site.

It in the N-terminal section; belongs to the FGAMS family. In terms of assembly, monomer.

It localises to the cytoplasm. The enzyme catalyses N(2)-formyl-N(1)-(5-phospho-beta-D-ribosyl)glycinamide + L-glutamine + ATP + H2O = 2-formamido-N(1)-(5-O-phospho-beta-D-ribosyl)acetamidine + L-glutamate + ADP + phosphate + H(+). Its pathway is purine metabolism; IMP biosynthesis via de novo pathway; 5-amino-1-(5-phospho-D-ribosyl)imidazole from N(2)-formyl-N(1)-(5-phospho-D-ribosyl)glycinamide: step 1/2. Phosphoribosylformylglycinamidine synthase involved in the purines biosynthetic pathway. Catalyzes the ATP-dependent conversion of formylglycinamide ribonucleotide (FGAR) and glutamine to yield formylglycinamidine ribonucleotide (FGAM) and glutamate. This is Phosphoribosylformylglycinamidine synthase from Salmonella typhi.